A 620-amino-acid chain; its full sequence is Glutathione-regulated potassium-efflux system protein KefC (620 aa).

The next 12 membrane-spanning stretches (helical) occupy residues 4–24, 26–46, 54–74, 90–110, 114–134, 149–169, 178–198, 218–238, 270–290, 294–314, 327–347, and 359–379; these read HTLLQALIYLGSAALIVPIAV, LGLGSVLGYLIAGCIIGPWGL, SILHFAEIGVVLMLFVIGLEL, GALQMVVCGGLIGLFCMFLGL, VAELIGMTLALSSTAIAMQAM, FAVLLFQDIAAIPLVAMIPLL, LGAFALSALKVAGALALVVLL, VFSAVALFLVFGFGLLLEEVG, GLLLGLFFIGVGMSIDFGTLV, LRILLLLAGFLAIKIVMLWLV, WFAVLLGQGSKFAFVVFGAAQ, and ALTLAVALSMAATPIFLVLLT. Positions 399 to 518 constitute an RCK N-terminal domain; sequence QPRVIVAGFG…AGVAMPERET (120 aa). The disordered stretch occupies residues 599-620; the sequence is QGTAEGKHSGEAADEPEVKPSI.

Belongs to the monovalent cation:proton antiporter 2 (CPA2) transporter (TC 2.A.37) family. KefC subfamily. As to quaternary structure, homodimer. Interacts with the regulatory subunit KefF.

Its subcellular location is the cell inner membrane. Functionally, pore-forming subunit of a potassium efflux system that confers protection against electrophiles. Catalyzes K(+)/H(+) antiport. The polypeptide is Glutathione-regulated potassium-efflux system protein KefC (Salmonella choleraesuis (strain SC-B67)).